Here is a 296-residue protein sequence, read N- to C-terminus: Antisense-enhancing sequence 1 (296 aa).

The active site involves Glu-47.

Belongs to the PhzF family.

In terms of biological role, may have isomerase activity. Enhances target gene silencing when coexpressed with antisense RNA. This is Antisense-enhancing sequence 1 (aes1) from Schizosaccharomyces pombe (strain 972 / ATCC 24843) (Fission yeast).